The following is a 344-amino-acid chain: GDSL esterase/lipase At2g19010 (344 aa).

An N-terminal signal peptide occupies residues 1–21; sequence MSKACWLVAAIIFTAATVVYG. The active-site Nucleophile is Ser-33. N-linked (GlcNAc...) asparagine glycosylation is present at Asn-303. Catalysis depends on residues Asp-311 and His-314.

It belongs to the 'GDSL' lipolytic enzyme family.

It is found in the secreted. The chain is GDSL esterase/lipase At2g19010 from Arabidopsis thaliana (Mouse-ear cress).